A 499-amino-acid polypeptide reads, in one-letter code: Signal recognition particle subunit SRP54 2 (499 aa).

The interval 1 to 295 (MVLAELGGSI…DVKPFVSRLL (295 aa)) is G-domain. GTP-binding positions include 108–115 (GLQGSGKT), 190–194 (DTSGR), and 248–251 (TKMD). Positions 296 to 499 (GMGDWSGFMD…MGGMFGGGDK (204 aa)) are M-domain.

It belongs to the GTP-binding SRP family. SRP54 subfamily. As to quaternary structure, component of a signal recognition particle (SRP) complex that consists of a 7SL RNA molecule of 300 nucleotides and six protein subunits: SRP72, SRP68, SRP54, SRP19, SRP14 and SRP9.

It is found in the cytoplasm. The protein resides in the endoplasmic reticulum. The catalysed reaction is GTP + H2O = GDP + phosphate + H(+). Its function is as follows. Component of the signal recognition particle (SRP) complex, a ribonucleoprotein complex that mediates the cotranslational targeting of secretory and membrane proteins to the endoplasmic reticulum (ER). As part of the SRP complex, associates with the SRP receptor (SR) component SRPRA to target secretory proteins to the endoplasmic reticulum membrane. Binds to the signal sequence of presecretory proteins when they emerge from the ribosomes. Displays basal GTPase activity, and stimulates reciprocal GTPase activation of the SR subunit SRPRA. Forms a guanosine 5'-triphosphate (GTP)-dependent complex with the SR subunit SRPRA. SR compaction and GTPase mediated rearrangement of SR drive SRP-mediated cotranslational protein translocation into the ER. Requires the presence of SRP9/SRP14 and/or SRP19 to stably interact with RNA. In Solanum lycopersicum (Tomato), this protein is Signal recognition particle subunit SRP54 2.